Reading from the N-terminus, the 726-residue chain is Myb-like protein Z (726 aa).

Disordered stretches follow at residues 15-109, 124-149, 161-239, and 272-303; these read DSND…SLSN, ASPS…YHPY, HYVS…TKQQ, and LIPS…NMRS. The span at 18–39 shows a compositional bias: low complexity; it reads DNNNNNNNNNNSNNNNNNNNNN. The segment covering 45–80 has biased composition (polar residues); the sequence is SSATSSPTGQDSTIDRPNSPSSSIKFTYPSKNSIVT. Low complexity predominate over residues 81-108; sequence SPSSLQLPSPSFSSSSSSSSSSSSSSLS. The segment covering 124–147 has biased composition (polar residues); that stretch reads ASPSKSSENSPTIHTSSLSPNSYH. Residues 165–177 are compositionally biased toward low complexity; sequence NNNNNNNNNNNNN. The segment covering 183 to 209 has biased composition (polar residues); that stretch reads SSELYNTSPSISSKTTPNGSSTNNSPF. Over residues 221 to 239 the composition is skewed to low complexity; it reads NNNNNNNNDRNENNTTKQQ. The Myb-like domain maps to 329–388; it reads IPIATRKLWSQEECCRLLEMVFQRDPQSVTSKESELRWRSIASTLGRTVTSTRKKYMRLM. Over residues 516–651 the composition is skewed to low complexity; it reads KQIQQQQKQK…NNNYRSSLSP (136 aa). Positions 516–726 are disordered; sequence KQIQQQQKQK…NNNNYNNYHN (211 aa). The segment covering 661–675 has biased composition (polar residues); the sequence is QSPQQKSNNENQQNF. Residues 709–726 are compositionally biased toward low complexity; it reads NLNNNNNNNNNNYNNYHN.

The chain is Myb-like protein Z (mybZ) from Dictyostelium discoideum (Social amoeba).